The following is a 187-amino-acid chain: Probable chorismate pyruvate-lyase (187 aa).

Residues Arg80, Leu117, and Glu176 each coordinate substrate.

Belongs to the UbiC family.

It localises to the cytoplasm. The catalysed reaction is chorismate = 4-hydroxybenzoate + pyruvate. The protein operates within cofactor biosynthesis; ubiquinone biosynthesis. Removes the pyruvyl group from chorismate, with concomitant aromatization of the ring, to provide 4-hydroxybenzoate (4HB) for the ubiquinone pathway. The polypeptide is Probable chorismate pyruvate-lyase (Halorhodospira halophila (strain DSM 244 / SL1) (Ectothiorhodospira halophila (strain DSM 244 / SL1))).